We begin with the raw amino-acid sequence, 189 residues long: Large ribosomal subunit protein bL17 (189 aa).

Residues 136 to 189 (KAAPAAEEEVVETEEAPAVEAEAAESEEAPAAEAEAAEAEAAETEEAPAAEDKK) are disordered. Acidic residues predominate over residues 141–189 (AEEEVVETEEAPAVEAEAAESEEAPAAEAEAAEAEAAETEEAPAAEDKK).

The protein belongs to the bacterial ribosomal protein bL17 family. In terms of assembly, part of the 50S ribosomal subunit. Contacts protein L32.

This chain is Large ribosomal subunit protein bL17, found in Paenarthrobacter aurescens (strain TC1).